Consider the following 116-residue polypeptide: Large ribosomal subunit protein eL22B (116 aa).

The protein belongs to the eukaryotic ribosomal protein eL22 family.

The polypeptide is Large ribosomal subunit protein eL22B (rpl22a) (Dictyostelium discoideum (Social amoeba)).